We begin with the raw amino-acid sequence, 106 residues long: Programmed cell death activator egl-1 (106 aa).

The segment at 73–81 (LAAMCDDFD) is BH3-like.

In terms of assembly, interacts with ced-9; the interaction results in ced-4 release from the ced-4/ced-9 complex. Interaction with ced-9 may enhance interaction of ced-9 with drp-1, but not with ced-4. A ced-9/egl-1 complex may recruit drp-1 to the mitochondrial surface.

The protein localises to the synapse. Plays a major role in programmed cell death (PCD or apoptosis) by negatively regulating ced-9. Binds to and directly inhibits the activity of ced-9, releasing the cell death activator ced-4 from a ced-9/ced-4 containing protein complex and allowing ced-4 to activate the cell-killing caspase ced-3. Required to activate programmed cell death in the sister cells of the serotonergic neurosecretory motor (NSM) neurons during embryogenesis. Required to activate programmed cell death in the sister cells of the M4 motor neuron and I1 pharyngeal neuron during embryogenesis. During larval development, required for the elimination of transient presynaptic components upstream of ced-9, ced-4 and ced-3 apoptotic pathway. Together with ain-1, a component of the miRNA-induced-silencing complex (miRISC), and probably upstream of ced-3 and ced-4, regulates temporal cell fate patterning during larval development. Has been shown in two studies to be dispensable in mitochondrial dynamics and morphology during early embryonic development. However, one study shows that during larval development, egl-1 is involved in modulating mitochondrial dynamics, perhaps acting by stabilizing the interaction between ced-9 and drp-1 in order to promote mitochondrial fission. Involved in inducing mitochondrial fragmentation during apoptosis, probably acting via ced-9 and dynamin-related protein drp-1. This is Programmed cell death activator egl-1 from Caenorhabditis elegans.